The chain runs to 33 residues: Imperacalcin (33 aa).

3 disulfides stabilise this stretch: C3-C17, C10-C21, and C16-C32. 2 important for stimulation of [3H]ryanodine binding to RYR1 regions span residues 8 to 9 (KR) and 19 to 20 (KK). Residues 22–24 (KRR) form an essential for stimulation of [3H]ryanodine binding to RYR1 region. An important for stimulation of [3H]ryanodine binding to RYR1 region spans residues 25–27 (GTN).

It belongs to the scorpion calcin family. As to expression, expressed by the venom gland.

The protein localises to the secreted. This toxin affects the activity of ryanodine receptors 1, 2 and 3 (RyR1, RyR2 and RyR3). At lower concentrations the toxin increases full openings of the RyRs, and at higher concentrations it inhibits full openings and induces openings to subconductance levels (30% of the full conductance state) and reduces the number of full conductance openings. The different actions may be attributed to the toxins binding at different sites on the RyRs, with binding at a high-affinity site mediating the increase in full openings and the induction of subconductance states evoked upon binding to a lower-affinity site. Furthermore, it triggers calcium release from sarcoplasmic vesicles (11.7 nM are enough to induce a sharp release, and 70% of the total calcium is released after toxin (100 nM) addition) probably by acting as a cell-penetrating peptide (CPP). In addition, it has been shown to dose-dependently stimulate ryanodine binding to RyR1 (EC(50)=8.7 nM). It also augments the bell-shaped calcium-[3H]ryanodine binding curve that is maximal at about 10 uM calcium concentration. It binds a different site as ryanodine. It acts synergistically with caffeine. In vivo, intracerebroventricular injection into mice induces neurotoxic symptoms, followed by death. This is Imperacalcin from Pandinus imperator (Emperor scorpion).